Consider the following 238-residue polypeptide: Orotidine 5'-phosphate decarboxylase (238 aa).

Substrate-binding positions include D10, K32, 59 to 68 (DLKLHDIPNT), T122, R184, Q193, G213, and R214. The Proton donor role is filled by K61.

Belongs to the OMP decarboxylase family. Type 1 subfamily. In terms of assembly, homodimer.

It catalyses the reaction orotidine 5'-phosphate + H(+) = UMP + CO2. It functions in the pathway pyrimidine metabolism; UMP biosynthesis via de novo pathway; UMP from orotate: step 2/2. Its function is as follows. Catalyzes the decarboxylation of orotidine 5'-monophosphate (OMP) to uridine 5'-monophosphate (UMP). The polypeptide is Orotidine 5'-phosphate decarboxylase (Bacillus cereus (strain ZK / E33L)).